The sequence spans 199 residues: Recombination protein RecR (199 aa).

The segment at 58–73 (CKICFNITDKEVCDIC) adopts a C4-type zinc-finger fold. The region spanning 81–176 (STICVVSHPM…KVTRIAHGIP (96 aa)) is the Toprim domain.

Belongs to the RecR family.

Functionally, may play a role in DNA repair. It seems to be involved in an RecBC-independent recombinational process of DNA repair. It may act with RecF and RecO. The polypeptide is Recombination protein RecR (Caldanaerobacter subterraneus subsp. tengcongensis (strain DSM 15242 / JCM 11007 / NBRC 100824 / MB4) (Thermoanaerobacter tengcongensis)).